The following is an 877-amino-acid chain: DNA polymerase I (877 aa).

In terms of domain architecture, 5'-3' exonuclease spans 177-270; sequence TPAQFIDLKA…LEDLVYSGPD (94 aa). The 164-residue stretch at 302 to 465 folds into the 3'-5' exonuclease domain; the sequence is DFTIVDQISQ…TEPILLEKLS (164 aa).

This sequence belongs to the DNA polymerase type-A family. In terms of assembly, single-chain monomer with multiple functions.

The catalysed reaction is DNA(n) + a 2'-deoxyribonucleoside 5'-triphosphate = DNA(n+1) + diphosphate. In terms of biological role, in addition to polymerase activity, this DNA polymerase exhibits 3'-5' and 5'-3' exonuclease activity. This Streptococcus pneumoniae serotype 4 (strain ATCC BAA-334 / TIGR4) protein is DNA polymerase I (polA).